A 121-amino-acid polypeptide reads, in one-letter code: Insertion element IS406 uncharacterized 13.3 kDa protein (121 aa).

The polypeptide is Insertion element IS406 uncharacterized 13.3 kDa protein (Burkholderia multivorans (strain ATCC 17616 / 249)).